The sequence spans 453 residues: Charged multivesicular body protein 7 (453 aa).

Residues 1-22 (MWSPEREAEAPAGGDPAGLLPP) are disordered. Low complexity predominate over residues 10–22 (APAGGDPAGLLPP). Ser-232 is subject to Phosphoserine. Residues 243-312 (QLMQSEQLLS…DTVQGILDRI (70 aa)) are a coiled coil. Residues 392-403 (TKEPLDLPDNPR) are compositionally biased toward basic and acidic residues. Disordered stretches follow at residues 392–417 (TKEP…PRIS) and 431–453 (SEGG…LKPL). Residue Thr-408 is modified to Phosphothreonine. Phosphoserine occurs at positions 410, 417, 431, and 441.

This sequence belongs to the SNF7 family. As to quaternary structure, interacts with CHMP4B, but not with VPS25. Interacts with LEMD2 (via C-terminus).

The protein resides in the cytoplasm. The protein localises to the nucleus envelope. ESCRT-III-like protein required to recruit the ESCRT-III complex to the nuclear envelope (NE) during late anaphase. Together with SPAST, the ESCRT-III complex promotes NE sealing and mitotic spindle disassembly during late anaphase. Recruited to the reforming NE during anaphase by LEMD2. Plays a role in the endosomal sorting pathway. This Homo sapiens (Human) protein is Charged multivesicular body protein 7 (CHMP7).